Reading from the N-terminus, the 1250-residue chain is Bifunctional autolysin (1250 aa).

The first 29 residues, 1 to 29 (MAKKFNYKLPSMVALTLVGSAVTAHQVQA), serve as a signal peptide directing secretion. Residues 103–138 (GDTRANQSATTNNTQPVAKSTSTTAPKTNTNVTNAG) are compositionally biased toward polar residues. 2 disordered regions span residues 103 to 151 (GDTR…NSEN) and 173 to 219 (AAAP…KYKP). Positions 173-196 (AAAPKAATTSAPKAKTEATPKVTT) are enriched in low complexity. The segment at 199-769 (ASAQPRSVAA…AVAQPKTAVK (571 aa)) is N-acetylmuramoyl-L-alanine amidase. GW domains are found at residues 437 to 511 (TVAA…YNTA), 513 to 587 (SPVN…DTAK), 606 to 680 (TVSS…YNNA), 682 to 756 (SPVN…VPAA), 778 to 853 (TTQT…VQNL), 855 to 930 (KEVK…APTA), and 937 to 1011 (AAKD…KELI). Residues 770-1250 (AYTVTKPQTT…GKYFDIPQYK (481 aa)) form an endo-beta-N-acetylglucosaminidase region.

The protein in the N-terminal section; belongs to the N-acetylmuramoyl-L-alanine amidase 2 family. This sequence in the C-terminal section; belongs to the glycosyl hydrolase 73 family. As to quaternary structure, oligomer; forms a ring structure at the cell surface which is important for efficient partitioning of daughter cells after cell division. Undergoes proteolytic processing to generate the two extracellular lytic enzymes, probably at the septal region on the cell surface.

The protein localises to the secreted. It carries out the reaction Hydrolyzes the link between N-acetylmuramoyl residues and L-amino acid residues in certain cell-wall glycopeptides.. The catalysed reaction is an N(4)-(oligosaccharide-(1-&gt;3)-[oligosaccharide-(1-&gt;6)]-beta-D-Man-(1-&gt;4)-beta-D-GlcNAc-(1-&gt;4)-alpha-D-GlcNAc)-L-asparaginyl-[protein] + H2O = an oligosaccharide-(1-&gt;3)-[oligosaccharide-(1-&gt;6)]-beta-D-Man-(1-&gt;4)-D-GlcNAc + N(4)-(N-acetyl-beta-D-glucosaminyl)-L-asparaginyl-[protein]. Functionally, endohydrolysis of the di-N-acetylchitobiosyl unit in high-mannose glycopeptides and glycoproteins containing the -[(Man)5(GlcNAc)2]-Asn structure. One N-acetyl-D-glucosamine residue remains attached to the protein; the rest of the oligosaccharide is released intact. Cleaves the peptidoglycan connecting the daughter cells at the end of the cell division cycle, resulting in the separation of the two newly divided cells. Acts as an autolysin in penicillin-induced lysis. The chain is Bifunctional autolysin (atl) from Staphylococcus aureus (strain MSSA476).